A 196-amino-acid chain; its full sequence is Transmembrane protein 126A (196 aa).

Over 1-34 (MESHKPSTSKDDLILNIISRKIKQLPESDRNLLE) the chain is Mitochondrial matrix. Residues 35-55 (YGSAYIGLNAAFGGLIANSLF) form a helical membrane-spanning segment. The Mitochondrial intermembrane portion of the chain corresponds to 56 to 57 (RR). A helical transmembrane segment spans residues 58-78 (ILNVTQARLASSLPMAVIPFL). Residues 79 to 106 (TANLSYQSLVSLPLSTGDLNCETCTTTR) are Mitochondrial matrix-facing. Residues 107–127 (GALVGLVMGGLYPILLAIPVN) form a helical membrane-spanning segment. At 128–159 (GGLAARYESSPLPQRGNIFNYWITVSKPVFRK) the chain is on the mitochondrial intermembrane side. Residues 160 to 176 (MLFPTLLQTVFASYLGS) form a helical membrane-spanning segment. At 177-196 (RQYKLLIKALQLPEPDLEIH) the chain is on the mitochondrial matrix side.

This sequence belongs to the TMEM126 family. As to quaternary structure, interacts with OXA1L; promoting cotranslational quality control in mitochondria. In the retina, significant levels of expression are detected in the ganglion cell layer, the optic nerve head, the outer plexiform layer, and in the outer ellipsoide length of photoreceptor inner segments.

Its subcellular location is the mitochondrion inner membrane. In terms of biological role, protein required for the cotranslational protein quality control in the inner membrane of the mitochondria. Associates with newly synthesized polypeptides and may act as a chaperone that cooperates with OXA1L for the insertion of newly synthesized mitochondrial proteins into the inner membrane. Required for the assembly of the ND4 module of mitochondrial complex I. The sequence is that of Transmembrane protein 126A from Mus musculus (Mouse).